The primary structure comprises 413 residues: Putative competence-damage inducible protein (413 aa).

Belongs to the CinA family.

In Pediococcus pentosaceus (strain ATCC 25745 / CCUG 21536 / LMG 10740 / 183-1w), this protein is Putative competence-damage inducible protein.